The chain runs to 54 residues: UPF0391 membrane protein Pnap_0920 (54 aa).

A run of 2 helical transmembrane segments spans residues Val6 to Gly26 and Ile30 to Leu50.

Belongs to the UPF0391 family.

It is found in the cell membrane. This chain is UPF0391 membrane protein Pnap_0920, found in Polaromonas naphthalenivorans (strain CJ2).